We begin with the raw amino-acid sequence, 491 residues long: Cobyric acid synthase (491 aa).

The GATase cobBQ-type domain maps to Arg-246–Leu-432. The active-site Nucleophile is the Cys-328. His-424 is a catalytic residue.

This sequence belongs to the CobB/CobQ family. CobQ subfamily.

It participates in cofactor biosynthesis; adenosylcobalamin biosynthesis. Catalyzes amidations at positions B, D, E, and G on adenosylcobyrinic A,C-diamide. NH(2) groups are provided by glutamine, and one molecule of ATP is hydrogenolyzed for each amidation. The polypeptide is Cobyric acid synthase (Novosphingobium aromaticivorans (strain ATCC 700278 / DSM 12444 / CCUG 56034 / CIP 105152 / NBRC 16084 / F199)).